Consider the following 301-residue polypeptide: Thiosulfate sulfurtransferase (301 aa).

Rhodanese domains follow at residues Gly-31–Tyr-138 and Gln-171–Glu-289. Cys-248 functions as the Cysteine persulfide intermediate in the catalytic mechanism. Arg-253 is a substrate binding site.

It catalyses the reaction thiosulfate + hydrogen cyanide = thiocyanate + sulfite + 2 H(+). The protein is Thiosulfate sulfurtransferase (thtR) of Corynebacterium glutamicum (strain ATCC 13032 / DSM 20300 / JCM 1318 / BCRC 11384 / CCUG 27702 / LMG 3730 / NBRC 12168 / NCIMB 10025 / NRRL B-2784 / 534).